We begin with the raw amino-acid sequence, 207 residues long: Dephospho-CoA kinase (207 aa).

A DPCK domain is found at 5–203 (AVGLTGGIAC…ARYRALASVF (199 aa)). Residue 13–18 (ACGKSL) participates in ATP binding.

This sequence belongs to the CoaE family.

The protein localises to the cytoplasm. The enzyme catalyses 3'-dephospho-CoA + ATP = ADP + CoA + H(+). Its pathway is cofactor biosynthesis; coenzyme A biosynthesis; CoA from (R)-pantothenate: step 5/5. Functionally, catalyzes the phosphorylation of the 3'-hydroxyl group of dephosphocoenzyme A to form coenzyme A. The protein is Dephospho-CoA kinase of Xylella fastidiosa (strain 9a5c).